Here is a 939-residue protein sequence, read N- to C-terminus: Translation initiation factor IF-2 (939 aa).

Residues 48–355 (KFAPAPKVEN…KPEKKEKEEE (308 aa)) form a disordered region. Residues 79–93 (QQNQAPKQPQQGTQN) show a composition bias toward low complexity. Over residues 114–130 (SRDKNSRRDNNNRDGQR) the composition is skewed to basic and acidic residues. Positions 131–257 (DNNGGYRNND…NNDRNNNGGF (127 aa)) are enriched in low complexity. The segment covering 287 to 355 (RNNDRRDSAP…KPEKKEKEEE (69 aa)) has biased composition (basic and acidic residues). The tr-type G domain occupies 440–609 (PRPPVVCVMG…LLTAEVNELK (170 aa)). A G1 region spans residues 449–456 (GHVDHGKT). 449–456 (GHVDHGKT) provides a ligand contact to GTP. A G2 region spans residues 474-478 (GITQK). The segment at 495–498 (DTPG) is G3. GTP is bound by residues 495–499 (DTPGH) and 549–552 (NKID). A G4 region spans residues 549–552 (NKID). The segment at 585-587 (SAH) is G5.

This sequence belongs to the TRAFAC class translation factor GTPase superfamily. Classic translation factor GTPase family. IF-2 subfamily.

The protein localises to the cytoplasm. In terms of biological role, one of the essential components for the initiation of protein synthesis. Protects formylmethionyl-tRNA from spontaneous hydrolysis and promotes its binding to the 30S ribosomal subunits. Also involved in the hydrolysis of GTP during the formation of the 70S ribosomal complex. The polypeptide is Translation initiation factor IF-2 (Lachnospira eligens (strain ATCC 27750 / DSM 3376 / VPI C15-48 / C15-B4) (Eubacterium eligens)).